Reading from the N-terminus, the 498-residue chain is Protein translocase subunit SecY (498 aa).

The next 10 helical transmembrane spans lie at F23–I43, F65–S87, I124–I144, A163–I183, G191–M211, A229–V249, A281–A301, P322–I342, F382–L402, and T406–Y426. Positions V478–P488 are enriched in basic and acidic residues. Positions V478 to W498 are disordered.

This sequence belongs to the SecY/SEC61-alpha family. As to quaternary structure, component of the Sec protein translocase complex. Heterotrimer consisting of SecY, SecE and SecG subunits. The heterotrimers can form oligomers, although 1 heterotrimer is thought to be able to translocate proteins. Interacts with the ribosome. Interacts with SecDF, and other proteins may be involved. Interacts with SecA.

The protein resides in the cell membrane. Functionally, the central subunit of the protein translocation channel SecYEG. Consists of two halves formed by TMs 1-5 and 6-10. These two domains form a lateral gate at the front which open onto the bilayer between TMs 2 and 7, and are clamped together by SecE at the back. The channel is closed by both a pore ring composed of hydrophobic SecY resides and a short helix (helix 2A) on the extracellular side of the membrane which forms a plug. The plug probably moves laterally to allow the channel to open. The ring and the pore may move independently. The protein is Protein translocase subunit SecY of Mycoplasmoides gallisepticum (strain R(low / passage 15 / clone 2)) (Mycoplasma gallisepticum).